A 334-amino-acid chain; its full sequence is Eukaryotic translation initiation factor 3 subunit H (334 aa).

The region spanning 20–152 (VQCDGLAAMK…LKAYRLTPQA (133 aa)) is the MPN domain.

This sequence belongs to the eIF-3 subunit H family. As to quaternary structure, component of the eukaryotic translation initiation factor 3 (eIF-3) complex.

The protein localises to the cytoplasm. In terms of biological role, component of the eukaryotic translation initiation factor 3 (eIF-3) complex, which is involved in protein synthesis of a specialized repertoire of mRNAs and, together with other initiation factors, stimulates binding of mRNA and methionyl-tRNAi to the 40S ribosome. The eIF-3 complex specifically targets and initiates translation of a subset of mRNAs involved in cell proliferation. The protein is Eukaryotic translation initiation factor 3 subunit H of Anopheles gambiae (African malaria mosquito).